Here is a 294-residue protein sequence, read N- to C-terminus: tRNA dimethylallyltransferase (294 aa).

11 to 18 lines the ATP pocket; that stretch reads GPTAVGKT. A substrate-binding site is contributed by 13–18; that stretch reads TAVGKT. Residues 36–39 are interaction with substrate tRNA; sequence DSQQ.

The protein belongs to the IPP transferase family. In terms of assembly, monomer. Mg(2+) is required as a cofactor.

It catalyses the reaction adenosine(37) in tRNA + dimethylallyl diphosphate = N(6)-dimethylallyladenosine(37) in tRNA + diphosphate. Catalyzes the transfer of a dimethylallyl group onto the adenine at position 37 in tRNAs that read codons beginning with uridine, leading to the formation of N6-(dimethylallyl)adenosine (i(6)A). The chain is tRNA dimethylallyltransferase from Lactococcus lactis subsp. cremoris (strain MG1363).